An 869-amino-acid chain; its full sequence is Leucine--tRNA ligase (869 aa).

A 'HIGH' region motif is present at residues 51-61 (PYPSGRIHMGH). A 'KMSKS' region motif is present at residues 636–640 (KMSKS). Lysine 639 provides a ligand contact to ATP.

Belongs to the class-I aminoacyl-tRNA synthetase family.

Its subcellular location is the cytoplasm. It catalyses the reaction tRNA(Leu) + L-leucine + ATP = L-leucyl-tRNA(Leu) + AMP + diphosphate. This is Leucine--tRNA ligase from Dinoroseobacter shibae (strain DSM 16493 / NCIMB 14021 / DFL 12).